Reading from the N-terminus, the 289-residue chain is ATP synthase gamma chain (289 aa).

It belongs to the ATPase gamma chain family. In terms of assembly, F-type ATPases have 2 components, CF(1) - the catalytic core - and CF(0) - the membrane proton channel. CF(1) has five subunits: alpha(3), beta(3), gamma(1), delta(1), epsilon(1). CF(0) has three main subunits: a, b and c.

It localises to the cell membrane. Its function is as follows. Produces ATP from ADP in the presence of a proton gradient across the membrane. The gamma chain is believed to be important in regulating ATPase activity and the flow of protons through the CF(0) complex. The chain is ATP synthase gamma chain from Lawsonia intracellularis (strain PHE/MN1-00).